A 235-amino-acid polypeptide reads, in one-letter code: Secretory carrier-associated membrane protein 5 (235 aa).

Topologically, residues Met-1–Arg-39 are cytoplasmic. A helical membrane pass occupies residues Leu-40–Ala-60. Residues Trp-61 to Gly-67 lie on the Extracellular side of the membrane. The helical transmembrane segment at Ala-68–Cys-88 threads the bilayer. The Cytoplasmic portion of the chain corresponds to Trp-89–Ser-102. A helical membrane pass occupies residues Phe-103–Gly-125. Over Ile-126–Ala-148 the chain is Extracellular. Residues Val-149–Leu-169 traverse the membrane as a helical segment. The Cytoplasmic portion of the chain corresponds to Ser-170 to Met-235.

Belongs to the SCAMP family. SCAMP5 subfamily. As to quaternary structure, interacts (via C-terminal part) with SYT1 and SYT2; interaction with synaptotagmins making a link with the SNARE molecules. Interacts with SLC9A7. In terms of tissue distribution, expressed both by neuronal and non-neuronal tissues. Expressed in brain, stomach, thyroid, spinal cord, lymph node, trachea, adrenal gland, bone marrow and in the different parts of brain. In thyroid tissues, it is expressed by the follicular epithelial cells. In the adrenal gland tissues it is detected in the zona fasciculata of the cortex region (at protein level).

It is found in the cell membrane. It localises to the golgi apparatus membrane. Its subcellular location is the golgi apparatus. The protein resides in the trans-Golgi network membrane. The protein localises to the recycling endosome membrane. It is found in the cytoplasmic vesicle. It localises to the secretory vesicle. Its subcellular location is the synaptic vesicle membrane. Required for the calcium-dependent exocytosis of signal sequence-containing cytokines such as CCL5. Probably acts in cooperation with the SNARE machinery. May play a role in accumulation of expanded polyglutamine (polyQ) protein huntingtin (HTT) in case of endoplasmic reticulum stress by inhibiting the endocytosis pathway. The polypeptide is Secretory carrier-associated membrane protein 5 (SCAMP5) (Homo sapiens (Human)).